Consider the following 338-residue polypeptide: MTKQKIAVLGPGSWGTALAQVLNDNGHEVRLWGNVVEQIEEINTSHTNQRYFKDITLDSKIKAYTNLEEAINNVDSILFVVPTKVTRLVAKQVANLLKHKVVIMHASKGLEPGTHERLSTILEEEISEQYRSDIVVVSGPSHAEEAIVRDITLITAASKDIGAAKYVQKLFSNHYFRLYTNTDVVGVETAGALKNIIAVGAGALHGLGYGDNAKAAIITRGLAEITRLGVQLGADPLTFSGLSGVGDLIVTGTSVHSRNWRAGDALGRGEKLEDIEKNMGMVIEGISTTKVAYEIAQNLNVYMPITEAIYKSIYEGANIKDSILDMMSNEFRSENEWH.

Positions 13, 14, and 108 each coordinate NADPH. Residues lysine 108, glycine 139, and serine 141 each coordinate sn-glycerol 3-phosphate. Residue alanine 143 participates in NADPH binding. 5 residues coordinate sn-glycerol 3-phosphate: lysine 194, aspartate 247, serine 257, arginine 258, and asparagine 259. Lysine 194 acts as the Proton acceptor in catalysis. Arginine 258 contacts NADPH. NADPH contacts are provided by valine 282 and glutamate 284.

The protein belongs to the NAD-dependent glycerol-3-phosphate dehydrogenase family.

It is found in the cytoplasm. The catalysed reaction is sn-glycerol 3-phosphate + NAD(+) = dihydroxyacetone phosphate + NADH + H(+). It catalyses the reaction sn-glycerol 3-phosphate + NADP(+) = dihydroxyacetone phosphate + NADPH + H(+). It participates in membrane lipid metabolism; glycerophospholipid metabolism. Functionally, catalyzes the reduction of the glycolytic intermediate dihydroxyacetone phosphate (DHAP) to sn-glycerol 3-phosphate (G3P), the key precursor for phospholipid synthesis. The sequence is that of Glycerol-3-phosphate dehydrogenase [NAD(P)+] from Streptococcus agalactiae serotype III (strain NEM316).